Reading from the N-terminus, the 129-residue chain is MVKAATRVRKKVKKNVAEGIAHVHASFNNTIVTITDRQGNALSWATSGGAGFKGSRKSTPFAAQVAAEQAGRAAQEYGVKNLEVRIKGPGPGRESAVRALNAAGFKITSISDVTPVPHNGCRPPKKRRI.

It belongs to the universal ribosomal protein uS11 family. In terms of assembly, part of the 30S ribosomal subunit. Interacts with proteins S7 and S18. Binds to IF-3.

In terms of biological role, located on the platform of the 30S subunit, it bridges several disparate RNA helices of the 16S rRNA. Forms part of the Shine-Dalgarno cleft in the 70S ribosome. The sequence is that of Small ribosomal subunit protein uS11 from Nitrosospira multiformis (strain ATCC 25196 / NCIMB 11849 / C 71).